We begin with the raw amino-acid sequence, 348 residues long: CCN family member 2 (348 aa).

The first 25 residues, Met1–Gly25, serve as a signal peptide directing secretion. The region spanning Gln26–Lys97 is the IGFBP N-terminal domain. 6 disulfides stabilise this stretch: Cys28–Cys53, Cys32–Cys55, Cys34–Cys56, Cys42–Cys59, Cys67–Cys81, and Cys73–Cys94. Residues Ala100–Asp166 form the VWFC domain. One can recognise a TSP type-1 domain in the interval Asn197–Glu242. The interval Glu246–Ala348 is heparin-binding. Disulfide bonds link Cys255-Cys292, Cys272-Cys306, Cys283-Cys322, Cys286-Cys324, and Cys291-Cys328. The region spanning Cys255–Pro329 is the CTCK domain.

The protein belongs to the CCN family. In terms of assembly, monomer. Interacts with TSKU. Testis, spleen, kidney, lung, heart, and brain (lowest level in testis and highest in lung).

The protein localises to the secreted. It is found in the extracellular space. It localises to the extracellular matrix. Major connective tissue mitoattractant secreted by vascular endothelial cells. Promotes proliferation and differentiation of chondrocytes. Is involved in the stimulation of osteoblast differentiation and has a critical role in osteogenesis. Mediates heparin- and divalent cation-dependent cell adhesion in many cell types including fibroblasts, myofibroblasts, endothelial and epithelial cells. Enhances fibroblast growth factor-induced DNA synthesis. This is CCN family member 2 from Mus musculus (Mouse).